Reading from the N-terminus, the 124-residue chain is MPTISQLVGSERKRLTKKTKSPALKACPERRGVCTRVYTSTPKKPNSALRKVARVRLTSGFEVTAYIPGIGHNLQEHSVVLLRGGRVKDLPGVRYHIIRGTLDTAGVKDRRQSRSKYGAKAPKD.

The disordered stretch occupies residues 1–26 (MPTISQLVGSERKRLTKKTKSPALKA). Residue Asp-89 is modified to 3-methylthioaspartic acid. Residues 104-124 (TAGVKDRRQSRSKYGAKAPKD) form a disordered region.

This sequence belongs to the universal ribosomal protein uS12 family. Part of the 30S ribosomal subunit. Contacts proteins S8 and S17. May interact with IF1 in the 30S initiation complex.

Functionally, with S4 and S5 plays an important role in translational accuracy. Its function is as follows. Interacts with and stabilizes bases of the 16S rRNA that are involved in tRNA selection in the A site and with the mRNA backbone. Located at the interface of the 30S and 50S subunits, it traverses the body of the 30S subunit contacting proteins on the other side and probably holding the rRNA structure together. The combined cluster of proteins S8, S12 and S17 appears to hold together the shoulder and platform of the 30S subunit. The polypeptide is Small ribosomal subunit protein uS12 (Prochlorococcus marinus (strain MIT 9215)).